The following is a 214-amino-acid chain: ATP-dependent Clp protease proteolytic subunit (214 aa).

The active-site Nucleophile is Ser-110. Residue His-135 is part of the active site.

This sequence belongs to the peptidase S14 family. As to quaternary structure, fourteen ClpP subunits assemble into 2 heptameric rings which stack back to back to give a disk-like structure with a central cavity, resembling the structure of eukaryotic proteasomes.

The protein localises to the cytoplasm. The catalysed reaction is Hydrolysis of proteins to small peptides in the presence of ATP and magnesium. alpha-casein is the usual test substrate. In the absence of ATP, only oligopeptides shorter than five residues are hydrolyzed (such as succinyl-Leu-Tyr-|-NHMec, and Leu-Tyr-Leu-|-Tyr-Trp, in which cleavage of the -Tyr-|-Leu- and -Tyr-|-Trp bonds also occurs).. Functionally, cleaves peptides in various proteins in a process that requires ATP hydrolysis. Has a chymotrypsin-like activity. Plays a major role in the degradation of misfolded proteins. In Legionella pneumophila (strain Corby), this protein is ATP-dependent Clp protease proteolytic subunit.